A 1036-amino-acid polypeptide reads, in one-letter code: Lethal(2) giant larvae protein homolog 1 (1036 aa).

10 WD repeats span residues 38–71 (SALAFDPELRIMAIGTRSGAVKIYGAPGVEFTGL), 78–119 (VTQM…GLSF), 139–175 (VTVVLLVAGNTAALGTESGSIFFLDVATLALLEGQTL), 199–233 (SLQGHLQDPSKILIGYSRGLLVIWSQATQSVDNVF), 239–271 (LESLCWGRDGSSIISSHSDGSYAIWSTDTGSPP), 289–331 (AINK…ETLV), 339–373 (VIDFFTVHSTQPEDECDNPQALAVLLEEELVVLDL), 395–473 (TCSA…YKLS), 517–592 (QKVA…RMLI), and 601–662 (TAVT…LRQS). At serine 662 the chain carries Phosphoserine. Residues 667–677 (RKSRVSGKKRT) show a composition bias toward basic residues. A disordered region spans residues 667 to 688 (RKSRVSGKKRTPAASSKLQEAN). Polar residues predominate over residues 679-688 (AASSKLQEAN). WD repeat units follow at residues 722 to 782 (VRCL…KEVQ), 791 to 843 (AIAV…VSAK), 848 to 901 (LTAH…VHYS), and 915 to 938 (VFTRHGQGFYLISPSEFERFSLSA). The residue at position 957 (threonine 957) is a Phosphothreonine. Phosphoserine is present on residues serine 964, serine 982, and serine 989. Residues 980–1002 (PESCEGSPSSAHSKRADTMEPPE) form a disordered region.

The protein belongs to the WD repeat L(2)GL family. As to quaternary structure, associated with nonmuscle myosin II heavy chain. Interacts with PRKCI/aPKC, PARD6B/Par-6 and PARD6A. Interacts with STX4A. Interacts with RAB10 (GDP-bound form); the interaction is direct and promotes RAB10 association with membranes and activation through competition with the Rab inhibitor GDI1. Interacts with DCAF1. In terms of processing, phosphorylated by PRKCI on at least one of the following Ser residues: Ser 654, Ser-658, Ser-662, Ser-669 and Ser-672. Phosphorylation is important for appropriated cell polarization.

The protein localises to the early endosome membrane. It localises to the golgi apparatus. Its subcellular location is the trans-Golgi network membrane. The protein resides in the golgi apparatus membrane. It is found in the cell projection. The protein localises to the axon. It localises to the cytoplasm. Its subcellular location is the cytoskeleton. Cortical cytoskeleton protein found in a complex involved in maintaining cell polarity and epithelial integrity. Involved in the regulation of mitotic spindle orientation, proliferation, differentiation and tissue organization of neuroepithelial cells. Involved in axonogenesis through RAB10 activation thereby regulating vesicular membrane trafficking toward the axonal plasma membrane. This Mus musculus (Mouse) protein is Lethal(2) giant larvae protein homolog 1 (Llgl1).